A 728-amino-acid chain; its full sequence is MRSLLLLASLAWLLLAQAKDDAKLEDNLLVLTVATKETEGFRRFKRSAQFFNYKIQSLGLGEDWSAAGGPSAAGGGQKVRLLKKALKKYADKEDLVILFVDSYDVVFASGPRELLKKFQQAKSRVVFSAEELIYPDRRLEAKYPTVPDGKRFLGSGGFIGYAPSLSKLVAEWEGQDNDSDQLFYTKIFLDPEKREQINISLDHRCRIFQNLDGALDEVVLKFEMGHVRARNLAYDTLPVVIHGNGPTKLQVNYLGNYIPRFWTFETGCTVCDEGLRSLKGIGDEALPTVLVGVFIEQPTPFLSLFFRRLLHLRYPQKQMRLFIHNQEQHHKLQVEQFLAEHGGEYQSVKLVGPEVRMANADARNMGADLCRQDQTCTYYFSVDADVALTEPNSLRLLIEQNKNVIAPLMTRHGRLWSNFWGALSADGYYARSEDYVDIVQGRRVGVWNVPYISNIYLIKGSALRAELRHVDLFHYSKLDPDMSFCANVRQQEVFMFLTNRHTFGHLLSLDNYQTTHLHNDLWEVFSNPQDWKEKYIHENYTKALAGKLVETPCPDVYWFPIFTEVACDELVEEMEHYGQWSLGDNKDNRIQGGYENVPTIDIHMNQITFEREWHKFLVEYIAPLTEKLYPGYYTKAQFDLAFVVRYKPDEQPSLMPHHDASTFTINIALNRVGEDYEGGGCRFLRYNCSVRAPRKGWALMHPGRLTHYHEGLPTTKGTRYIAVSFVDP.

An N-terminal signal peptide occupies residues 1–18 (MRSLLLLASLAWLLLAQA). Residues asparagine 177, asparagine 198, and asparagine 539 are each glycosylated (N-linked (GlcNAc...) asparagine). A Fe2OG dioxygenase domain is found at 637 to 728 (QFDLAFVVRY…RYIAVSFVDP (92 aa)). Residues histidine 657 and aspartate 659 each contribute to the Fe cation site. N-linked (GlcNAc...) asparagine glycosylation occurs at asparagine 687. Fe cation is bound at residue histidine 709. Arginine 719 is an active-site residue.

In terms of assembly, homodimer. Identified in a complex with P3H3 and P3H4. It depends on Fe(2+) as a cofactor. L-ascorbate is required as a cofactor.

It localises to the rough endoplasmic reticulum membrane. The catalysed reaction is L-lysyl-[collagen] + 2-oxoglutarate + O2 = (5R)-5-hydroxy-L-lysyl-[collagen] + succinate + CO2. Its function is as follows. Part of a complex composed of PLOD1, P3H3 and P3H4 that catalyzes hydroxylation of lysine residues in collagen alpha chains and is required for normal assembly and cross-linkling of collagen fibrils. Forms hydroxylysine residues in -Xaa-Lys-Gly- sequences in collagens. These hydroxylysines serve as sites of attachment for carbohydrate units and are essential for the stability of the intermolecular collagen cross-links. The protein is Procollagen-lysine,2-oxoglutarate 5-dioxygenase 1 (Plod1) of Rattus norvegicus (Rat).